A 777-amino-acid polypeptide reads, in one-letter code: Nuclear autoantigenic sperm protein (777 aa).

Position 2 is an N-acetylalanine (Ala-2). At Lys-34 the chain carries N6-acetyllysine. Residues 44 to 77 (AKKLLGLGQKHLVMGDIPAAVNAFQEAASLLGKK) form a TPR 1 repeat. The tract at residues 117–128 (EEEEGEKTEEES) is histone-binding. Position 124 is a phosphothreonine (Thr-124). At Ser-128 the chain carries Phosphoserine. Basic and acidic residues-rich tracts occupy residues 152-186 (MGEK…REDM), 227-259 (VTSK…EKGG), and 267-276 (IEEKPKEASK). Positions 152–496 (MGEKEAQKTE…ALENKSLQEN (345 aa)) are disordered. A histone-binding region spans residues 211-244 (EEGKGAAAPEGLSEAEVTSKKPDQEIPGAEEGKS). Lys-243 carries the post-translational modification N6-acetyllysine. At Ser-244 the chain carries Phosphoserine. At Lys-285 the chain carries N6-acetyllysine. Positions 303-319 (DEPKEQVAASESERGKA) are enriched in basic and acidic residues. A Phosphoserine modification is found at Ser-312. Over residues 342 to 353 (AADASAAEAGSE) the composition is skewed to low complexity. 3 positions are modified to phosphoserine: Ser-399, Ser-411, and Ser-440. A histone-binding region spans residues 458 to 501 (EQMKEGEETEGSEEEDKENDKAEETLNDSALENKSLQENEEEEI). Positions 464–474 (EETEGSEEEDK) are enriched in acidic residues. At Thr-466 the chain carries Phosphothreonine. 3 positions are modified to phosphoserine: Ser-469, Ser-486, and Ser-492. Polar residues predominate over residues 484–493 (NDSALENKSL). TPR repeat units lie at residues 531–564 (AQAH…QEQY) and 573–606 (AETH…IEKR). Positions 593-648 (VAQFSKSIEVIEKRMAVLNEQMKEAEGSPTEYEKEIEELKELLPEIREKIEDAKES) form a coiled coil. Ser-651 carries the post-translational modification Phosphoserine. Low complexity predominate over residues 667–681 (STSGFTPSGGSSSVS). Residues 667 to 777 (STSGFTPSGG…AGATVESTAC (111 aa)) are disordered. Thr-672 is modified (phosphothreonine). Ser-694 and Ser-695 each carry phosphoserine. Residues 705–711 (VRKKRKP) carry the Nuclear localization signal motif. Positions 710 to 728 (KPEEESPRKDDAKKAKQEP) are enriched in basic and acidic residues. Ser-715 carries the post-translational modification Phosphoserine. A Glycyl lysine isopeptide (Lys-Gly) (interchain with G-Cter in SUMO1) cross-link involves residue Lys-725. Ser-734 carries the phosphoserine modification.

The protein belongs to the NASP family. As to quaternary structure, binds to linker H1 histones. Interacts with histones H2A, H2B, H3 and H4. Interacts with histone H3.3. Interacts with histones H3 and H4; NASP is a histone chaperone that stabilizes and maintains a soluble pool of histone H3-H4 dimers. Interacts with ASF1A and ASF1B; the interaction is probably indirect and mediated by H3-H4. Also binds to HSP90 in the cytoplasm. This interaction stimulates binding of NASP to H1-6/H1T.

The protein resides in the cytoplasm. The protein localises to the nucleus. In terms of biological role, component of the histone chaperone network. Binds and stabilizes histone H3-H4 not bound to chromatin to maintain a soluble reservoir and modulate degradation by chaperone-mediated autophagy. Required for DNA replication, normal cell cycle progression and cell proliferation. Forms a cytoplasmic complex with HSP90 and H1 linker histones and stimulates HSP90 ATPase activity. NASP and H1 histone are subsequently released from the complex and translocate to the nucleus where the histone is released for binding to DNA. The sequence is that of Nuclear autoantigenic sperm protein from Bos taurus (Bovine).